The following is a 331-amino-acid chain: Phenylalanine--tRNA ligase alpha subunit (331 aa).

Glu252 serves as a coordination point for Mg(2+).

Belongs to the class-II aminoacyl-tRNA synthetase family. Phe-tRNA synthetase alpha subunit type 1 subfamily. In terms of assembly, tetramer of two alpha and two beta subunits. Requires Mg(2+) as cofactor.

The protein localises to the cytoplasm. The enzyme catalyses tRNA(Phe) + L-phenylalanine + ATP = L-phenylalanyl-tRNA(Phe) + AMP + diphosphate + H(+). This Stenotrophomonas maltophilia (strain R551-3) protein is Phenylalanine--tRNA ligase alpha subunit.